A 247-amino-acid polypeptide reads, in one-letter code: Probable transcriptional regulatory protein TDE_1487 (247 aa).

This sequence belongs to the TACO1 family.

It is found in the cytoplasm. This is Probable transcriptional regulatory protein TDE_1487 from Treponema denticola (strain ATCC 35405 / DSM 14222 / CIP 103919 / JCM 8153 / KCTC 15104).